The chain runs to 186 residues: Ribosome-recycling factor (186 aa).

This sequence belongs to the RRF family.

The protein localises to the cytoplasm. Responsible for the release of ribosomes from messenger RNA at the termination of protein biosynthesis. May increase the efficiency of translation by recycling ribosomes from one round of translation to another. The sequence is that of Ribosome-recycling factor from Paraburkholderia xenovorans (strain LB400).